A 316-amino-acid polypeptide reads, in one-letter code: DNA-directed RNA polymerase III subunit RPC6 (316 aa).

Residue Ala-2 is modified to N-acetylalanine. Residues Lys-5 and Lys-7 each participate in a glycyl lysine isopeptide (Lys-Gly) (interchain with G-Cter in SUMO2) cross-link. Cys-287, Cys-290, Cys-296, and Cys-307 together coordinate [4Fe-4S] cluster.

Belongs to the eukaryotic RPC34/RPC39 RNA polymerase subunit family. As to quaternary structure, component of the RNA polymerase III complex consisting of 17 subunits: a ten-subunit horseshoe-shaped catalytic core composed of POLR3A/RPC1, POLR3B/RPC2, POLR1C/RPAC1, POLR1D/RPAC2, POLR3K/RPC10, POLR2E/RPABC1, POLR2F/RPABC2, POLR2H/RPABC3, POLR2K/RPABC4 and POLR2L/RPABC5; a mobile stalk composed of two subunits POLR3H/RPC8 and CRCP/RPC9, protruding from the core and functioning primarily in transcription initiation; and additional subunits homologous to general transcription factors of the RNA polymerase II machinery, POLR3C/RPC3-POLR3F/RPC6-POLR3G/RPC7 heterotrimer required for transcription initiation and POLR3D/RPC4-POLR3E/RPC5 heterodimer involved in both transcription initiation and termination. Directly interacts with POLR3C. Interacts with TBP and TFIIIB90 and GTF3C4. Interacts with MAF1. As part of the RNA polymerase III complex, interacts with PKP2.

The protein resides in the nucleus. Its function is as follows. DNA-dependent RNA polymerase catalyzes the transcription of DNA into RNA using the four ribonucleoside triphosphates as substrates. Specific peripheric component of RNA polymerase III (Pol III) which synthesizes small non-coding RNAs including 5S rRNA, snRNAs, tRNAs and miRNAs from at least 500 distinct genomic loci. Part of POLR3C/RPC3-POLR3F/RPC6-POLR3G/RPC7 heterotrimer that coordinates the dynamics of Pol III stalk and clamp modules during the transition from apo to elongation state. Pol III plays a key role in sensing and limiting infection by intracellular bacteria and DNA viruses, including varicella zoster virus. Acts as a nuclear and cytosolic DNA sensor detecting AT-rich DNA, involved in innate immune response. Can sense non-self dsDNA that serves as template for transcription into dsRNA. The non-self RNA polymerase III transcripts, such as Epstein-Barr virus-encoded RNAs (EBERs) induce type I interferon and NF-kappa-B through the RIG-I pathway. Preferentially binds double-stranded DNA (dsDNA). This is DNA-directed RNA polymerase III subunit RPC6 from Homo sapiens (Human).